A 353-amino-acid chain; its full sequence is uncharacterized protein (353 aa).

The next 9 helical transmembrane spans lie at alanine 16 to glycine 36, valine 77 to leucine 97, tyrosine 106 to leucine 128, serine 140 to alanine 160, leucine 167 to alanine 187, glycine 208 to isoleucine 228, leucine 263 to proline 283, histidine 296 to serine 316, and isoleucine 323 to leucine 343.

Belongs to the binding-protein-dependent transport system permease family. FecCD subfamily. As to quaternary structure, the complex is composed of two ATP-binding proteins (YvrA), two transmembrane proteins (YvrB) and a solute-binding protein (YvrC).

The protein localises to the cell membrane. Its function is as follows. Probably part of an ABC transporter complex. Probably responsible for the translocation of the substrate across the membrane. This is an uncharacterized protein from Bacillus subtilis (strain 168).